The following is a 572-amino-acid chain: Phosphoenolpyruvate-protein phosphotransferase (572 aa).

Catalysis depends on H191, which acts as the Tele-phosphohistidine intermediate. Phosphoenolpyruvate-binding residues include R298 and R334. Mg(2+) is bound by residues E433 and D457. Phosphoenolpyruvate is bound by residues 456-457 (ND) and R467. C504 functions as the Proton donor in the catalytic mechanism.

It belongs to the PEP-utilizing enzyme family. As to quaternary structure, homodimer. Mg(2+) serves as cofactor.

The protein resides in the cytoplasm. It catalyses the reaction L-histidyl-[protein] + phosphoenolpyruvate = N(pros)-phospho-L-histidyl-[protein] + pyruvate. In terms of biological role, general (non sugar-specific) component of the phosphoenolpyruvate-dependent sugar phosphotransferase system (sugar PTS). This major carbohydrate active-transport system catalyzes the phosphorylation of incoming sugar substrates concomitantly with their translocation across the cell membrane. Enzyme I transfers the phosphoryl group from phosphoenolpyruvate (PEP) to the phosphoryl carrier protein (HPr). The protein is Phosphoenolpyruvate-protein phosphotransferase (ptsI) of Staphylococcus aureus (strain Mu50 / ATCC 700699).